Reading from the N-terminus, the 775-residue chain is Chloride channel protein CLC-a (775 aa).

A disordered region spans residues 1-28 (MDEDGNLQISNSNYNGEEEGEDPENNTL). Helical transmembrane passes span 88–108 (TLACLVGLFTGLIATLINLAV), 131–151 (GLMVFTGANLGLTLVATVLVV), 178–198 (FGFTTMMVKIVGSIGAVAAGL), 206–226 (LVHIGSCIASLLGQGGPDNHR), 248–268 (GSASGVCAAFRSPVGGVLFAL), 278–298 (ALLWRTFFSTAVVVVVLRAFI), 328–348 (AADIIPVTLIGVFGGILGSLY), 371–391 (VLLSLGVSLFTSVCLFGLPFL), 453–473 (MVSLWIFFGLYCILGLITFGI), 478–498 (GLFLPIILMGSAYGRMLGTAM), 510–530 (AVLGAASLMAGSMRMTVSLCV), and 531–551 (IFLELTNNLLLLPITMFVLLI). 2 consecutive CBS domains span residues 595–658 (AKPP…FLNE) and 703–768 (TNTT…HLDK). A helical transmembrane segment spans residues 730–750 (HLLVVPKIQASGMSPVIGILT).

The protein belongs to the chloride channel (TC 2.A.49) family. As to quaternary structure, homodimer. Interacts with PP2A5. As to expression, broadly expressed in the plant.

The protein resides in the membrane. In terms of biological role, voltage-gated chloride channel that could play a role in the regulation of nitrate content. The protein is Chloride channel protein CLC-a (CLC-A) of Arabidopsis thaliana (Mouse-ear cress).